The primary structure comprises 275 residues: NAD kinase (275 aa).

The active-site Proton acceptor is the Asp68. Residues 68 to 69, Arg73, 136 to 137, Lys147, Arg164, Asp166, 177 to 182, Ala201, and Gln236 contribute to the NAD(+) site; these read DG, NE, and TAYAMS.

The protein belongs to the NAD kinase family. The cofactor is a divalent metal cation.

It is found in the cytoplasm. The enzyme catalyses NAD(+) + ATP = ADP + NADP(+) + H(+). Involved in the regulation of the intracellular balance of NAD and NADP, and is a key enzyme in the biosynthesis of NADP. Catalyzes specifically the phosphorylation on 2'-hydroxyl of the adenosine moiety of NAD to yield NADP. This is NAD kinase from Methanosarcina acetivorans (strain ATCC 35395 / DSM 2834 / JCM 12185 / C2A).